A 332-amino-acid chain; its full sequence is Protein FAM9A (332 aa).

The segment covering 1–13 has biased composition (basic residues); sequence MEPVGRKRSRKAA. Disordered stretches follow at residues 1-114 and 186-293; these read MEPV…EHTG and QKDD…PTGV. 2 stretches are compositionally biased toward basic and acidic residues: residues 74–91 and 98–114; these read GKDP…FTET and DEHG…EHTG. Over residues 196 to 217 the composition is skewed to low complexity; that stretch reads AAAAAAEAAAAAEAAAAAAEVI. A compositionally biased stretch (acidic residues) spans 218 to 275; the sequence is VVEDEEEEEKEEEEEKEEEEEEGEEEGGGEEGEEGGGGGEGEETEEEEEEEEEEEEEE. A compositionally biased stretch (basic and acidic residues) spans 276–285; it reads QIKAFQEKQK.

The protein belongs to the XLR/SYCP3 family. As to expression, expressed exclusively in testis.

The protein resides in the nucleus. It localises to the nucleolus. The protein is Protein FAM9A of Homo sapiens (Human).